A 199-amino-acid chain; its full sequence is Putative rhomboid protease YdcA (199 aa).

Helical transmembrane passes span 14-34, 65-85, 97-117, 122-142, 147-167, and 172-192; these read LYPV…FFSL, ILLH…FLFA, FLLV…VTEP, HVGA…MVLF, IGQE…LMSF, and INMM…FLCV. The Nucleophile role is filled by Ser126. His177 serves as the catalytic Charge relay system.

It belongs to the peptidase S54 family.

The protein localises to the cell membrane. This Bacillus subtilis (strain 168) protein is Putative rhomboid protease YdcA (ydcA).